The following is a 526-amino-acid chain: Fluoride export protein 1 (526 aa).

Disordered stretches follow at residues 1-73 (MMTA…RRAS) and 90-149 (ASNI…KQAG). Residues 1-159 (MMTAPSDTEG…VVAKRQKVSR (159 aa)) lie on the Cytoplasmic side of the membrane. 2 stretches are compositionally biased toward basic and acidic residues: residues 21-36 (SPDRNRQRNLVDDHNH) and 103-123 (PITRLDTLERVRTRDRDYLRE). Residues 160–180 (LATELYTISYLIFFSLLGTLA) form a helical membrane-spanning segment. Residues 181–194 (RLGLQALTSAYPQS) lie on the Extracellular side of the membrane. Residues 195–215 (PIIFPSIWPNFAGCVVMGFLA) form a helical membrane-spanning segment. Residues 216 to 260 (EDRMLFRPDWGQQQPNPKKDDDDDEEAKDIDPAAAKKAHMALKKT) are Cytoplasmic-facing. Residues 223-242 (PDWGQQQPNPKKDDDDDEEA) form a disordered region. A helical transmembrane segment spans residues 261–281 (IPLYVGLATGFCGSFTSFSSF). Residues 282–310 (IRDIYLALSNDLAAHGSSAAPVSRNGGYS) are Extracellular-facing. A helical transmembrane segment spans residues 311–331 (FMALLAVTITTISLSLSGLFA). The Cytoplasmic segment spans residues 332 to 361 (GAHLAIAIATLFTRFDLGLPYTFVSRILDR). Residues 362-382 (LIVLLGFGCWLGAVLLSIWPP) traverse the membrane as a helical segment. Residues 383-398 (DRHSAQPEKERWRGTA) lie on the Extracellular side of the membrane. Residues 399-419 (TFALVFAPLGCLTRFYASAHL) traverse the membrane as a helical segment. Residues 420-424 (NGRLP) are Cytoplasmic-facing. Residues 425–445 (SFPLGTFVVNMLGTAVLGMAW) traverse the membrane as a helical segment. Over 446-452 (DLNHVPS) the chain is Extracellular. The chain crosses the membrane as a helical span at residues 453-473 (LGGVVGCQVLQGVADGFCGCL). Residues 474-492 (TTVSTWVSELAALRRRHAY) lie on the Cytoplasmic side of the membrane. The helical transmembrane segment at 493-513 (VYGGASVGGGLALMVVVMGSL) threads the bilayer. Residues 514 to 526 (RWTEGFGEVKCIS) are Extracellular-facing.

This sequence belongs to the fluoride channel Fluc/FEX (TC 1.A.43) family.

It localises to the cell membrane. The enzyme catalyses fluoride(in) = fluoride(out). Its function is as follows. Fluoride channel required for the rapid expulsion of cytoplasmic fluoride. The protein is Fluoride export protein 1 of Neurospora crassa (strain ATCC 24698 / 74-OR23-1A / CBS 708.71 / DSM 1257 / FGSC 987).